The sequence spans 471 residues: Glutamate--tRNA ligase 1 (471 aa).

A 'HIGH' region motif is present at residues 10 to 20; it reads PSPTGYLHIGG. Cys-99, Cys-101, Cys-126, and Asp-128 together coordinate Zn(2+). Positions 238–242 match the 'KMSKS' region motif; sequence RLSKR. Lys-241 contacts ATP.

This sequence belongs to the class-I aminoacyl-tRNA synthetase family. Glutamate--tRNA ligase type 1 subfamily. As to quaternary structure, monomer. Zn(2+) is required as a cofactor.

The protein resides in the cytoplasm. It catalyses the reaction tRNA(Glu) + L-glutamate + ATP = L-glutamyl-tRNA(Glu) + AMP + diphosphate. Its function is as follows. Catalyzes the attachment of glutamate to tRNA(Glu) in a two-step reaction: glutamate is first activated by ATP to form Glu-AMP and then transferred to the acceptor end of tRNA(Glu). In Alkalilimnicola ehrlichii (strain ATCC BAA-1101 / DSM 17681 / MLHE-1), this protein is Glutamate--tRNA ligase 1.